Consider the following 632-residue polypeptide: Golgin subfamily A member 8H (632 aa).

A disordered region spans residues 1–77 (MAEETQHNKL…SSATLKDLES (77 aa)). Coiled coils occupy residues 110-201 (VEHQ…LSSR) and 240-468 (ECAE…EKAD). 2 stretches are compositionally biased toward basic and acidic residues: residues 352–362 (KQEERIQEQHK) and 427–440 (HGGE…EEAP). Disordered regions lie at residues 352–379 (KQEE…EPNN), 423–452 (PGEG…DPES), and 496–524 (LSEP…DEGE). Residues 508 to 520 (LGGGHHQAGAQGG) are compositionally biased toward gly residues.

This sequence belongs to the GOLGA8 family.

The polypeptide is Golgin subfamily A member 8H (GOLGA8H) (Homo sapiens (Human)).